The chain runs to 303 residues: Coenzyme PQQ synthesis protein B (303 aa).

Belongs to the PqqB family.

Its pathway is cofactor biosynthesis; pyrroloquinoline quinone biosynthesis. Its function is as follows. May be involved in the transport of PQQ or its precursor to the periplasm. This chain is Coenzyme PQQ synthesis protein B, found in Pseudomonas savastanoi pv. phaseolicola (strain 1448A / Race 6) (Pseudomonas syringae pv. phaseolicola (strain 1448A / Race 6)).